A 398-amino-acid polypeptide reads, in one-letter code: Probable elongation factor 1-gamma (398 aa).

The 134-residue stretch at 66–199 (GTSANAETVQ…SVAQFNQAKF (134 aa)) folds into the GST C-terminal domain. The tract at residues 210 to 248 (APKAEKPKKEAKPAAAAAQPEDDEPKEEKSKDPFQDMPK) is disordered. The segment covering 211–221 (PKAEKPKKEAK) has biased composition (basic and acidic residues). The region spanning 239 to 398 (SKDPFQDMPK…KKFNQGKIFK (160 aa)) is the EF-1-gamma C-terminal domain.

As to quaternary structure, EF-1 is composed of four subunits: alpha, beta, delta, and gamma. AMPylated by fic-1.

Its function is as follows. Probably plays a role in anchoring the complex to other cellular components. The sequence is that of Probable elongation factor 1-gamma from Caenorhabditis elegans.